Consider the following 435-residue polypeptide: 3-phosphoshikimate 1-carboxyvinyltransferase (435 aa).

Residues Lys15, Ser16, and Arg20 each contribute to the 3-phosphoshikimate site. Lys15 serves as a coordination point for phosphoenolpyruvate. Gly96 and Arg124 together coordinate phosphoenolpyruvate. 3-phosphoshikimate contacts are provided by Ser169, Gln171, Ser195, Asp319, and Lys346. Gln171 serves as a coordination point for phosphoenolpyruvate. The active-site Proton acceptor is the Asp319. 2 residues coordinate phosphoenolpyruvate: Arg350 and Arg395.

It belongs to the EPSP synthase family. Monomer.

It localises to the cytoplasm. The catalysed reaction is 3-phosphoshikimate + phosphoenolpyruvate = 5-O-(1-carboxyvinyl)-3-phosphoshikimate + phosphate. The protein operates within metabolic intermediate biosynthesis; chorismate biosynthesis; chorismate from D-erythrose 4-phosphate and phosphoenolpyruvate: step 6/7. Its function is as follows. Catalyzes the transfer of the enolpyruvyl moiety of phosphoenolpyruvate (PEP) to the 5-hydroxyl of shikimate-3-phosphate (S3P) to produce enolpyruvyl shikimate-3-phosphate and inorganic phosphate. This chain is 3-phosphoshikimate 1-carboxyvinyltransferase, found in Chlorobium phaeobacteroides (strain BS1).